Consider the following 694-residue polypeptide: DNA-binding protein RFX2 (694 aa).

Positions 174–249 (HLQWLLDNYE…YHYYGIRLKP (76 aa)) form a DNA-binding region, RFX-type winged-helix. 2 disordered regions span residues 267–310 (QQPI…QHHQ) and 658–694 (KDDVSELGSDTEGDPHISGQPPVKRERVELNHSMQEM). Residues 289 to 299 (PANSSQHASPE) show a composition bias toward polar residues. Residues 300–310 (QSVAAQSQHHQ) show a composition bias toward low complexity.

Belongs to the RFX family. Homodimer. Heterodimer; heterodimerizes with other rfx proteins. In terms of tissue distribution, preferentially expressed in ciliated tissues, such as neural tube, gastrocoel roof plate, epidermal multiciliated cells, otic vesicles and kidneys.

The protein resides in the nucleus. The protein localises to the cytoplasm. Functionally, transcription factor that acts as a key regulator of ciliogenesis. Specifically regulates expression of genes required for cilium assembly and function. Recognizes and binds the X-box, a regulatory motif with DNA sequence 5'-GTNRCC(0-3N)RGYAAC-3' present on promoters. Required for neural tube closure and neural ciliogenesis. In Xenopus laevis (African clawed frog), this protein is DNA-binding protein RFX2 (rfx2).